The primary structure comprises 516 residues: Rho guanine nucleotide exchange factor 9 (516 aa).

The SH3 domain occupies 8-67 (DSIVSAEAVWDHVTMANRELAFKAGDVIKVLDASNKDWWWGQIDDEEGWFPASFVRLWVN). The segment at 100–110 (RDQMRANVINE) is interaction with GPHN. The region spanning 103–287 (MRANVINEIM…RNVTQQINER (185 aa)) is the DH domain. The PH domain occupies 318 to 425 (ELIYTGEMAW…WLRAFREERK (108 aa)). The interval 453-480 (PKQKGVNSARSVPPSYPPPQDPLNHGQY) is disordered. A Phosphoserine modification is found at S502.

As to quaternary structure, interacts with GPHN. Detected in brain. Detected at low levels in heart.

It localises to the cytoplasm. It is found in the postsynaptic density. Acts as a guanine nucleotide exchange factor (GEF) for CDC42. Promotes formation of GPHN clusters. This Homo sapiens (Human) protein is Rho guanine nucleotide exchange factor 9 (ARHGEF9).